The sequence spans 513 residues: Probable histone deacetylase 19 (513 aa).

Residues 23–334 (RRVCYFYDPD…WCYETGVALG (312 aa)) are histone deacetylase. The Proton donor/acceptor role is filled by histidine 154. Zn(2+) contacts are provided by aspartate 189, histidine 191, and aspartate 277. Disordered regions lie at residues 384–432 (HAPS…ESSR) and 446–513 (ENAT…YHKP). Residues 398–409 (EIPEQDEDQDDP) are compositionally biased toward acidic residues. The span at 410-432 (DERHDPDSDMEVDDHKAVEESSR) shows a compositional bias: basic and acidic residues. Residues 492 to 504 (NVKNEPESSTKLQ) are compositionally biased toward polar residues.

It belongs to the histone deacetylase family. HD type 1 subfamily. Requires Zn(2+) as cofactor.

The protein localises to the nucleus. It carries out the reaction N(6)-acetyl-L-lysyl-[histone] + H2O = L-lysyl-[histone] + acetate. In terms of biological role, responsible for the deacetylation of lysine residues on the N-terminal part of the core histones (H2A, H2B, H3 and H4). Histone deacetylation gives a tag for epigenetic repression and plays an important role in transcriptional regulation, cell cycle progression and developmental events. Histone deacetylases act via the formation of large multiprotein complexes. In Zea mays (Maize), this protein is Probable histone deacetylase 19.